The chain runs to 624 residues: Forkhead box protein O1 (624 aa).

2 disordered regions span residues 1–62 and 94–128; these read MAEA…PSAS and APLS…SRRN. T24 carries the phosphothreonine; by PKB/AKT1 or PKB/AKT2 and SGK1 modification. Low complexity-rich tracts occupy residues 37–62 and 105–119; these read SATS…PSAS and AAAA…AGQP. Positions 130-224 form a DNA-binding region, fork-head; that stretch reads WGNLSYADLI…KSGKSPRRRA (95 aa). DNA-binding regions lie at residues 181–188 and 204–207; these read NSIRHNLS and SSWW. Position 182 is a phosphoserine; by STK4/MST1 (S182). 3 positions are modified to phosphoserine: S188, S204, and S205. The interval 204–306 is disordered; the sequence is SSWWMLNPEG…RLSPIMTEQD (103 aa). K215 and K218 each carry N6-acetyllysine. S219 is subject to Phosphoserine; by CDK1. Residues R221 and R223 each carry the omega-N-methylarginine; by PRMT1 modification. A Nuclear localization signal motif is present at residues 221–223; it reads RRR. S226 is subject to Phosphoserine; by PKB/AKT1 and SGK1. Residues K232, K235, and K244 each carry the N6-acetyllysine modification. The span at 234-245 shows a compositional bias: basic residues; that stretch reads AKSRGRAAKKKA. The segment at 253 to 532 is sufficient for interaction with NLK; it reads GAGDSPGSQF…RLAPVKTALQ (280 aa). S257 and S268 each carry phosphoserine. Polar residues predominate over residues 279-296; sequence NWSTFRPRTSSNASTISG. A Phosphoserine; by PKB/AKT1 modification is found at S289. Position 292 is a phosphoserine; by CK1 and SGK1 (S292). S295 carries the phosphoserine; by CK1 modification. The residue at position 299 (S299) is a Phosphoserine; by DYRK1A. T303 is modified (phosphothreonine). The required for interaction with RUNX2 stretch occupies residues 333 to 428; it reads SEISNPENME…YGGMSQYCAP (96 aa). K393 is subject to N6-acetyllysine. Positions 431–435 match the Required for interaction with SIRT1 motif; it reads LKELL.

Interacts with LRPPRC. Interacts with RUNX2; the interaction inhibits RUNX2 transcriptional activity and mediates the IGF1/insulin-dependent BGLAP expression in osteoblasts Interacts with PPP2R1A; the interaction regulates the dephosphorylation of FOXO1 at Thr-24 and Ser-263 leading to its nuclear import. Interacts with NLK. Interacts with SIRT1; the interaction results in the deacetylation of FOXO1 leading to activation of FOXO1-mediated transcription of genes involved in DNA repair and stress resistance. Binds to CDK1. Interacts with the 14-3-3 proteins, YWHAG and YWHAZ; the interactions require insulin-stimulated phosphorylation on Thr-24, promote nuclear exit and loss of transcriptional activity. Interacts with SKP2; the interaction ubiquitinates FOXO1 leading to its proteasomal degradation. The interaction requires the presence of KRIT1. Interacts (via the C-terminal half) with ATF4 (via its DNA binding domain); the interaction occurs in osteoblasts, regulates glucose homeostasis via suppression of beta-cell proliferation and subsequent decrease in insulin production. Interacts with PRMT1; the interaction methylates FOXO1, prevents PKB/AKT1 phosphorylation and retains FOXO1 in the nucleus. Interacts with EP300 and CREBBP; the interactions acetylate FOXO1. Interacts with SIRT2; the interaction is disrupted in response to oxidative stress or serum deprivation, leading to increased level of acetylated FOXO1, which promotes stress-induced autophagy by stimulating E1-like activating enzyme ATG7. Interacts (acetylated form) with ATG7; the interaction is increased in response to oxidative stress or serum deprivation and promotes the autophagic process leading to cell death. Interacts (acetylated form) with PPARG. Interacts with XBP1; this interaction is direct and leads to FOXO1 ubiquitination and degradation via the proteasome pathway. Interacts (via the Fork-head domain) with CEBPA; the interaction increases when FOXO1 is deacetylated. Interacts with WDFY2. Forms a complex with WDFY2 and AKT1. Interacts with CRY1. Interacts with PPIA/CYPA; the interaction promotes FOXO1 dephosphorylation, nuclear accumulation and transcriptional activity. Interacts with TOX4; FOXO1 is required for full induction of TOX4-dependent activity and the interaction is inhibited by insulin. Interacts (when phosphorylated on Ser-226) with STUB1/CHIP. In terms of processing, phosphorylation by NLK promotes nuclear export and inhibits the transcriptional activity. In response to growth factors, phosphorylation on Thr-24, Ser-226 and Ser-292 by PKB/AKT1 promotes nuclear export and inactivation of transactivational activity. Phosphorylation on Thr-24 is required for binding 14-3-3 proteins. Phosphorylation of Ser-226 decreases DNA-binding activity and promotes the phosphorylation of Thr-24 and Ser-289, permitting phosphorylation of Ser-292 and Ser-295, probably by CDK1, leading to nuclear exclusion and loss of function. Stress signals, such as response to oxygen or nitric oxide, attenuate the PKB/AKT1-mediated phosphorylation leading to nuclear retention. Phosphorylation of Ser-299 is independent of IGF1 and leads to reduced function. Dephosphorylated on Thr-24 and Ser-226 by PP2A in beta-cells under oxidative stress leading to nuclear retention. Phosphorylation of Ser-219 by CDK1 disrupts binding of 14-3-3 proteins leading to nuclear accumulation and has no effect on DNA binding nor transcriptional activity. Phosphorylation by STK4/MST1 on Ser-182, upon oxidative stress, inhibits binding to 14-3-3 proteins and nuclear export. PPIA/CYPA promotes its dephosphorylation on Ser-226. Ubiquitinated by SKP2. Ubiquitination leads to proteasomal degradation. Ubiquitinated by STUB1/CHIP; when Ser-226 is phosphorylated. Post-translationally, methylation inhibits AKT1-mediated phosphorylation at Ser-226 and is increased by oxidative stress. In terms of processing, acetylated. Acetylation at Lys-232 and Lys-244 are necessary for autophagic cell death induction. Deacetylated by SIRT2 in response to oxidative stress or serum deprivation, thereby negatively regulating FOXO1-mediated autophagic cell death. Once in the nucleus, acetylated by CREBBP/EP300. Acetylation diminishes the interaction with target DNA and attenuates the transcriptional activity. It increases the phosphorylation at Ser-226. Deacetylation by SIRT1 results in reactivation of the transcriptional activity. Oxidative stress by hydrogen peroxide treatment appears to promote deacetylation and uncoupling of insulin-induced phosphorylation. By contrast, resveratrol acts independently of acetylation. Acetylated at Lys-393, promoting its localization to the nucleus and transcription factor activity. Deacetylation at Lys-393 by SIRT6, promotes its translocation into the cytoplasm, preventing its transcription factor activity. Deacetylation and subsequent inhibition by SIRT6 has different effects depending on cell types: it inhibits gluconeogenesis in hepatocytes, promotes glucose sensing in pancreatic beta-cells and regulates lipid catabolism in brown adipocytes.

The protein resides in the cytoplasm. It localises to the nucleus. Transcription factor that is the main target of insulin signaling and regulates metabolic homeostasis in response to oxidative stress. Binds to the insulin response element (IRE) with consensus sequence 5'-TT[G/A]TTTTG-3' and the related Daf-16 family binding element (DBE) with consensus sequence 5'-TT[G/A]TTTAC-3'. Activity suppressed by insulin. Main regulator of redox balance and osteoblast numbers and controls bone mass. Orchestrates the endocrine function of the skeleton in regulating glucose metabolism. Also acts as a key regulator of chondrogenic commitment of skeletal progenitor cells in response to lipid availability: when lipids levels are low, translocates to the nucleus and promotes expression of SOX9, which induces chondrogenic commitment and suppresses fatty acid oxidation. Acts synergistically with ATF4 to suppress osteocalcin/BGLAP activity, increasing glucose levels and triggering glucose intolerance and insulin insensitivity. Also suppresses the transcriptional activity of RUNX2, an upstream activator of osteocalcin/BGLAP. Acts as an inhibitor of glucose sensing in pancreatic beta cells by acting as a transcription repressor and suppressing expression of PDX1. In hepatocytes, promotes gluconeogenesis by acting together with PPARGC1A and CEBPA to activate the expression of genes such as IGFBP1, G6PC1 and PCK1. Also promotes gluconeogenesis by directly promoting expression of PPARGC1A and G6PC1. Important regulator of cell death acting downstream of CDK1, PKB/AKT1 and STK4/MST1. Promotes neural cell death. Mediates insulin action on adipose tissue. Regulates the expression of adipogenic genes such as PPARG during preadipocyte differentiation and, adipocyte size and adipose tissue-specific gene expression in response to excessive calorie intake. Regulates the transcriptional activity of GADD45A and repair of nitric oxide-damaged DNA in beta-cells. Required for the autophagic cell death induction in response to starvation or oxidative stress in a transcription-independent manner. Mediates the function of MLIP in cardiomyocytes hypertrophy and cardiac remodeling. Positive regulator of apoptosis in cardiac smooth muscle cells as a result of its transcriptional activation of pro-apoptotic genes. Regulates endothelial cell (EC) viability and apoptosis in a PPIA/CYPA-dependent manner via transcription of CCL2 and BCL2L11 which are involved in EC chemotaxis and apoptosis. The chain is Forkhead box protein O1 (FOXO1) from Bos taurus (Bovine).